The primary structure comprises 308 residues: Oxygen-dependent coproporphyrinogen-III oxidase (308 aa).

S100 serves as a coordination point for substrate. Positions 104 and 114 each coordinate a divalent metal cation. H114 serves as the catalytic Proton donor. 116-118 (NFR) contacts substrate. A divalent metal cation-binding residues include H153 and H183. Residues 248–283 (YVEFNLVFDRGTIFGLQSGGRTESILSSMPPMATWK) are important for dimerization. Residue 266–268 (GGR) coordinates substrate.

Belongs to the aerobic coproporphyrinogen-III oxidase family. As to quaternary structure, homodimer. The cofactor is a divalent metal cation.

It is found in the cytoplasm. It carries out the reaction coproporphyrinogen III + O2 + 2 H(+) = protoporphyrinogen IX + 2 CO2 + 2 H2O. Its pathway is porphyrin-containing compound metabolism; protoporphyrin-IX biosynthesis; protoporphyrinogen-IX from coproporphyrinogen-III (O2 route): step 1/1. Functionally, involved in the heme biosynthesis. Catalyzes the aerobic oxidative decarboxylation of propionate groups of rings A and B of coproporphyrinogen-III to yield the vinyl groups in protoporphyrinogen-IX. The chain is Oxygen-dependent coproporphyrinogen-III oxidase from Francisella tularensis subsp. mediasiatica (strain FSC147).